A 240-amino-acid polypeptide reads, in one-letter code: uncharacterized protein (240 aa).

The interval 93 to 160 (QEASGCTVGE…AGGGAAASGQ (68 aa)) is disordered. Composition is skewed to low complexity over residues 110-119 (AQPSQPAQGG) and 129-150 (GGAEEAGGAQASQPAESAPAEN).

This is an uncharacterized protein from Streptomyces viridochromogenes.